The primary structure comprises 689 residues: Armadillo-like helical domain-containing protein 3 (689 aa).

The chain crosses the membrane as a helical span at residues Ile-520–Gly-538.

The protein belongs to the ARMH3 family. In terms of assembly, interacts with PI4KB. Interacts with GBF1.

It localises to the golgi apparatus membrane. Its subcellular location is the cytoplasm. Its function is as follows. Involved in GBF1 recruitment, Golgi maintenance and protein secretion. This Homo sapiens (Human) protein is Armadillo-like helical domain-containing protein 3.